Consider the following 1295-residue polypeptide: Phosphoribosylformylglycinamidine synthase (1295 aa).

A disordered region spans residues 305-327; that stretch reads WPGAATGSGGEIRDEGATGRGAK. ATP is bound by residues 307–318 and A678; that span reads GAATGSGGEIRD. Residues E718, N722, and D884 each coordinate Mg(2+). An ATP-binding site is contributed by S886. The region spanning 1042–1295 is the Glutamine amidotransferase type-1 domain; sequence VAVLREQGVN…IFRNARKQLG (254 aa). C1135 acts as the Nucleophile in catalysis. Catalysis depends on residues H1260 and E1262.

In the N-terminal section; belongs to the FGAMS family. Monomer.

Its subcellular location is the cytoplasm. It catalyses the reaction N(2)-formyl-N(1)-(5-phospho-beta-D-ribosyl)glycinamide + L-glutamine + ATP + H2O = 2-formamido-N(1)-(5-O-phospho-beta-D-ribosyl)acetamidine + L-glutamate + ADP + phosphate + H(+). Its pathway is purine metabolism; IMP biosynthesis via de novo pathway; 5-amino-1-(5-phospho-D-ribosyl)imidazole from N(2)-formyl-N(1)-(5-phospho-D-ribosyl)glycinamide: step 1/2. Its function is as follows. Phosphoribosylformylglycinamidine synthase involved in the purines biosynthetic pathway. Catalyzes the ATP-dependent conversion of formylglycinamide ribonucleotide (FGAR) and glutamine to yield formylglycinamidine ribonucleotide (FGAM) and glutamate. The sequence is that of Phosphoribosylformylglycinamidine synthase from Shigella sonnei (strain Ss046).